Here is a 777-residue protein sequence, read N- to C-terminus: MAMVTARQFLASAAELGSGRRRCGGGGACDMREDGGVEALMQCQRVSDLLIAASFLSIPLELFYFATCADLSEVKCAVLHFCAFIVLCGATHLLAAFTHAHPHSAPLLRALTAAKVLAAVASSAAAVSLLTFIPKLLRIKVRESLLRDKASRLHRDLGLVRRREEATSRAVRELTGRIRASPPDAHAILRTTALQLADALGLHACAVWMPAAGRPHDLVLVHHLTSRPDDAADLLLEVGDACTVAADDPDVVDVMASKVAKVLGPDSALAMASSVGAAPAGAVAAIRIPILRVSIYDGGGTPEVTEASYAILVLLLPPHDAAGGWSSHDLEIVQVVADQAAVALSHAAVLEESRSMRDRFAEQHRALMQAKHRAAMATRAFSSIQSAMCHAMRRPVHSVVGLVSMLQHPEADTMRPEQRLAVDAIARTSNLLSALMDEVTVNRQHLSVQRKPFSLHALIKEAISVAGCLSHCGGAGFLHQPECALPEWVVGDERRVFHLLLDMVGTLLNRCNTGSGACRLSFSVRICNVGEERYSLDWIPMRPTFSGCNVCVKFKVGIGRSRSCAIERSLPCELPRRSAATTSSQMGHIFSGYFNKIVQMMNGNMWSASDSEGVGESVTLILQFKLQQGHVEASPPYIPHLNGLRVLLADDDAMNRGVTKKILERLGCQVMSAPSGAHCLSLLASAEASFQLVVLDLDDRAVPSAAMDRFEVALRIRELRNSCWLLIVIAVAAGVVATDDGGAVQELCQRAGINGLVQKPVTLPALGAQLCRVLQDN.

Transmembrane regions (helical) follow at residues 49–69, 77–97, and 113–133; these read LLIA…ATCA, AVLH…LAAF, and AAKV…LTFI. 2 residues coordinate Cu cation: cysteine 88 and histidine 92. A GAF domain is found at 184–344; the sequence is DAHAILRTTA…VVADQAAVAL (161 aa). The region spanning 387–521 is the Histidine kinase domain; that stretch reads AMCHAMRRPV…NTGSGACRLS (135 aa). Position 390 is a phosphohistidine; by autocatalysis (histidine 390). The 130-residue stretch at 645-774 folds into the Response regulatory domain; sequence RVLLADDDAM…ALGAQLCRVL (130 aa). Aspartate 696 bears the 4-aspartylphosphate mark.

Belongs to the ethylene receptor family. Cu cation serves as cofactor.

It is found in the endoplasmic reticulum membrane. It catalyses the reaction ATP + protein L-histidine = ADP + protein N-phospho-L-histidine.. In terms of biological role, ethylene receptor related to bacterial two-component regulators. Acts as a redundant negative regulator of ethylene signaling. This Oryza sativa subsp. japonica (Rice) protein is Ethylene receptor 4 (ETR4).